The sequence spans 514 residues: MSHNAPLVLMILDGWGYNENDRYNAIAKANTPQWDEWWQTCPHILLKASGLPVGLPDEQMGNSEVGHMHIGAGRVIQQDFTRINEAINNGKFAKNAVFHEVIDQLKKTEKSLHIMGLLSPGGVHSHEQHLFALLALCNQKKFRSVHLHLFLDGRDTPPQSALDSLKCLNEELAKHPVATINSICGRYYAMDRDKRWQRVEPVYNLLTQGKSERQFPDAETAIHFYYKNKISDEFVPPTLIGKEHSIQDGDAVLFFNFRADRARQLTSTFLDPSFKGFERKTLPKLSYFVSMTQYDKNLFTTTAFPPVPLNNTLGEVLSSHGLSQLRIAETEKYAHVTFFFNGGCESVFTNEERIMVPSPQVATYDLQPEMSAHELTKTLIAAINSQDYHVIICNYANADMVGHTGNFEATVQAIECLDQCMQQVWQALKNNGGKLLITADHGNAEEMFSEATNQAHTAHTSEPVPFLYVGGGWHFTHSEGSLIDIAPSLLALLGITPPPEMTGRILLEKNHAHA.

Mn(2+) is bound by residues D13 and S63. S63 acts as the Phosphoserine intermediate in catalysis. Residues H124, 154–155, R186, R192, 258–261, and K332 each bind substrate; these read RD and RADR. Residues D399, H403, D440, H441, and H459 each coordinate Mn(2+).

The protein belongs to the BPG-independent phosphoglycerate mutase family. In terms of assembly, monomer. Requires Mn(2+) as cofactor.

The catalysed reaction is (2R)-2-phosphoglycerate = (2R)-3-phosphoglycerate. The protein operates within carbohydrate degradation; glycolysis; pyruvate from D-glyceraldehyde 3-phosphate: step 3/5. Catalyzes the interconversion of 2-phosphoglycerate and 3-phosphoglycerate. This chain is 2,3-bisphosphoglycerate-independent phosphoglycerate mutase, found in Legionella pneumophila (strain Lens).